The following is a 204-amino-acid chain: MANPIKIGIGGPVGAGKTQLIEKVVKRLSKEMSIGVITNDIYTKEDEKILVNSGVLPESRIIGVETGGCPHTAIREDASMNFAAIDELLERHDDIELIFIESGGDNLAATFSPELVDFSIYIIDVAQGEKIPRKGGQGMIKSDFFVINKTDLAPYVGASLEQMAEDTKVFRGKRPFTFTNLKTDEGLDEVIDWIERDTLLKGLS.

11–18 (GPVGAGKT) contacts GTP.

Belongs to the SIMIBI class G3E GTPase family. UreG subfamily. In terms of assembly, homodimer. UreD, UreF and UreG form a complex that acts as a GTP-hydrolysis-dependent molecular chaperone, activating the urease apoprotein by helping to assemble the nickel containing metallocenter of UreC. The UreE protein probably delivers the nickel.

It localises to the cytoplasm. Functionally, facilitates the functional incorporation of the urease nickel metallocenter. This process requires GTP hydrolysis, probably effectuated by UreG. This chain is Urease accessory protein UreG, found in Staphylococcus aureus (strain Mu3 / ATCC 700698).